The following is a 76-amino-acid chain: DNA-directed RNA polymerase subunit epsilon (76 aa).

This sequence belongs to the RNA polymerase subunit epsilon family. In terms of assembly, RNAP is composed of a core of 2 alpha, a beta and a beta' subunit. The core is associated with a delta subunit, and at least one of epsilon or omega. When a sigma factor is associated with the core the holoenzyme is formed, which can initiate transcription.

The catalysed reaction is RNA(n) + a ribonucleoside 5'-triphosphate = RNA(n+1) + diphosphate. A non-essential component of RNA polymerase (RNAP). The chain is DNA-directed RNA polymerase subunit epsilon from Streptococcus thermophilus (strain CNRZ 1066).